The following is a 500-amino-acid chain: Glycerol kinase (500 aa).

Thr11 provides a ligand contact to ADP. ATP contacts are provided by Thr11, Thr12, and Ser13. Residue Thr11 participates in sn-glycerol 3-phosphate binding. Arg15 contributes to the ADP binding site. 4 residues coordinate sn-glycerol 3-phosphate: Arg81, Glu82, Tyr133, and Asp242. 5 residues coordinate glycerol: Arg81, Glu82, Tyr133, Asp242, and Gln243. 2 residues coordinate ADP: Thr264 and Gly307. Thr264, Gly307, Gln311, and Gly411 together coordinate ATP. Residue Gly411 participates in ADP binding.

It belongs to the FGGY kinase family.

The enzyme catalyses glycerol + ATP = sn-glycerol 3-phosphate + ADP + H(+). It functions in the pathway polyol metabolism; glycerol degradation via glycerol kinase pathway; sn-glycerol 3-phosphate from glycerol: step 1/1. Its activity is regulated as follows. Inhibited by fructose 1,6-bisphosphate (FBP). Key enzyme in the regulation of glycerol uptake and metabolism. Catalyzes the phosphorylation of glycerol to yield sn-glycerol 3-phosphate. The chain is Glycerol kinase from Rhodopseudomonas palustris (strain BisA53).